We begin with the raw amino-acid sequence, 226 residues long: Cytidylate kinase (226 aa).

Gly10–Thr18 serves as a coordination point for ATP.

The protein belongs to the cytidylate kinase family. Type 1 subfamily.

Its subcellular location is the cytoplasm. The enzyme catalyses CMP + ATP = CDP + ADP. It carries out the reaction dCMP + ATP = dCDP + ADP. This Flavobacterium psychrophilum (strain ATCC 49511 / DSM 21280 / CIP 103535 / JIP02/86) protein is Cytidylate kinase.